We begin with the raw amino-acid sequence, 148 residues long: Leghemoglobin 29 (148 aa).

Residues 2–148 (EFTLRQEALV…LAVAIMKEMS (147 aa)) form the Globin domain. Y30 carries the post-translational modification Nitrated tyrosine. Residue S45 coordinates heme b. S45 carries the phosphoserine modification. H63 is an O2 binding site. Heme b contacts are provided by H95 and K98. Nitrated tyrosine is present on Y136.

It belongs to the plant globin family. In terms of assembly, monomer. Nitrated in effective nodules and particularly in hypoxic conditions; this mechanism may play a protective role in the symbiosis by buffering toxic peroxynitrite NO(2)(-). Nitration level decrease during nodule senescence. Post-translationally, phosphorylation at Ser-45 disrupts the molecular environment of its porphyrin ring oxygen binding pocket, thus leading to a reduced oxygen consumption and to the delivery of oxygen O(2) to symbiosomes. In terms of tissue distribution, accumulates in root nodules after inoculation by bacteria of the genus Rhizobium. Expressed in mycorrhizal roots in the presence of the mycorrhizal fungus Glomus fasciculatum.

It localises to the cytoplasm. Its subcellular location is the cytosol. The protein resides in the nucleus. Its function is as follows. Leghemoglobin that reversibly binds oxygen O(2) through a pentacoordinated heme iron. In root nodules, facilitates the diffusion of oxygen to the bacteroids while preventing the bacterial nitrogenase from being inactivated by buffering dioxygen, nitric oxide and carbon monoxide, and promoting the formation of reactive oxygen species (ROS, e.g. H(2)O(2)). This role is essential for symbiotic nitrogen fixation (SNF). The sequence is that of Leghemoglobin 29 from Vicia faba (Broad bean).